A 403-amino-acid polypeptide reads, in one-letter code: E2F transcription factor-like E2FE (403 aa).

Residues 34-99 (RKQKSLGLLC…RAKNQYTWKG (66 aa)) mediate DNA binding. The segment at 128–167 (VKGSDDEDDDEESSQPHSSSQTDSSKPGSLPQSSDPSKID) is disordered. The span at 142-152 (QPHSSSQTDSS) shows a compositional bias: low complexity. Polar residues predominate over residues 153 to 163 (KPGSLPQSSDP). Residues 169–250 (RREKSLGLLT…SRKPAFKWLG (82 aa)) mediate DNA binding. Positions 282-319 (VKRSKSSSSSQENATERRLKMKKHSTPESSYNKSFDVH) are disordered.

Belongs to the E2F/DP family. As to expression, expressed exclusively in mitotically dividing cells. Highly expressed in young leaves and mature flowers. Lower expression in young stalk and in young and mature flowers.

The protein localises to the nucleus. Its function is as follows. Inhibitor of E2F-dependent activation of gene expression. Binds specifically the E2 recognition site without interacting with DP proteins and prevents transcription activation by E2F/DP heterodimers. Controls the timing of endocycle onset and inhibits endoreduplication. The chain is E2F transcription factor-like E2FE (E2FE) from Arabidopsis thaliana (Mouse-ear cress).